Consider the following 196-residue polypeptide: Large ribosomal subunit protein uL5 (196 aa).

Belongs to the universal ribosomal protein uL5 family. In terms of assembly, part of the 50S ribosomal subunit; part of the 5S rRNA/L5/L18/L25 subcomplex. Contacts the 5S rRNA and the P site tRNA. Forms a bridge to the 30S subunit in the 70S ribosome.

In terms of biological role, this is one of the proteins that bind and probably mediate the attachment of the 5S RNA into the large ribosomal subunit, where it forms part of the central protuberance. In the 70S ribosome it contacts protein S13 of the 30S subunit (bridge B1b), connecting the 2 subunits; this bridge is implicated in subunit movement. Contacts the P site tRNA; the 5S rRNA and some of its associated proteins might help stabilize positioning of ribosome-bound tRNAs. This is Large ribosomal subunit protein uL5 from Acidothermus cellulolyticus (strain ATCC 43068 / DSM 8971 / 11B).